A 589-amino-acid polypeptide reads, in one-letter code: MTGEITILYGSETGNAEEYAKYLKQRLRSYNLKPINLASLDDYPLKRLVTHTSYLIIICSTTGQGEIPRNGKKFMKFILKKKLPSDLFQHLQLTTFGVGDSSYVKYNYAIKKIHTRLMQLGCQLLSPRCEADEISPEGVDGYYIEWEAELIAALLNKFPSASKISSEAVPMPEYRISVSKSDTTIDPKEVIDNPIVSRLGKDGLKLGTVLENNRLTSSNHFQDVRDFKFSSNGLNYLPGDTVSLFPCNFDEDVDALLQSQPQWLKIADKPLNLKNFPHLEGGFADILTLRTLFKYHLDIMSIPRRSFFALLWHFVDPSTEDGEREQEKLKEFGSLDEPEELYDYANRPRRSILETLLEFENNLTIPVSYILDLFPLIRPRMFSIASCPSSKEVELVVAIVEYKTIIRKIRRGVCTRWLKNLKPGDQFLFSIQRSSFKYKDDNSPIIMVAPGTGIAPMKSLIDEVIQNNSKQELYLFFGCRFKEKDNLIESFWHGNENQNLHLVSAYSRDSNSKYRYVQDALFAHSELIGKLLIEQNAKVFVCGSSGKMPREVKITFVEIVKKFTGMDEGDAQKYIIGLEDNGRYKEDAW.

The Flavodoxin-like domain occupies 5–151 (ITILYGSETG…YYIEWEAELI (147 aa)). Residues 11–16 (SETGNA), 60–63 (STTG), 98–107 (VGDSSYVKYN), and Glu133 contribute to the FMN site. One can recognise an FAD-binding FR-type domain in the interval 202–439 (DGLKLGTVLE…SIQRSSFKYK (238 aa)). Residues Arg349, 380-383 (RMFS), and 412-415 (GVCT) contribute to the FAD site. Residues Thr452 and 507–508 (SR) each bind NADP(+). Trp589 contributes to the FAD binding site.

Belongs to the NADPH-dependent diflavin oxidoreductase NDOR1 family. This sequence in the N-terminal section; belongs to the flavodoxin family. It in the C-terminal section; belongs to the flavoprotein pyridine nucleotide cytochrome reductase family. Interacts with DRE2; as part of the cytosolic iron-sulfur (Fe-S) protein assembly (CIA) machinery. FAD serves as cofactor. It depends on FMN as a cofactor.

It localises to the cytoplasm. The protein localises to the mitochondrion. It carries out the reaction 2 oxidized [2Fe-2S]-[protein] + NADPH = 2 reduced [2Fe-2S]-[protein] + NADP(+) + H(+). In terms of biological role, NADPH-dependent reductase which is a central component of the cytosolic iron-sulfur (Fe-S) protein assembly (CIA) machinery. Transfers electrons from NADPH via its FAD and FMN prosthetic groups to the [2Fe-2S] cluster of DRE2, another key component of the CIA machinery. In turn, this reduced cluster provides electrons for assembly of cytosolic iron-sulfur cluster proteins. Positively controls H(2)O(2)-induced cell death. In Candida albicans (strain SC5314 / ATCC MYA-2876) (Yeast), this protein is NADPH-dependent diflavin oxidoreductase 1.